Reading from the N-terminus, the 393-residue chain is Pigment production hydroxylase (393 aa).

In terms of biological role, involved in pigment production acting as a hydroxylase that transforms indole to indoxyl, resulting in the formation of indigo. In Rhodococcus erythropolis (Arthrobacter picolinophilus), this protein is Pigment production hydroxylase.